We begin with the raw amino-acid sequence, 691 residues long: Ribonuclease J (691 aa).

Positions 1–89 (MTDNNHYENN…TRNYAKEELD (89 aa)) are disordered. The tract at residues 1-132 (MTDNNHYENN…KIQVEHLNPH (132 aa)) is loss of region decreases protein stability, still able to interact with RhpA, but has decreased RNase activity even on ssRNA. Positions 10-19 (NESNENSSEN) are enriched in low complexity. Residues 41-57 (RENAQKNGESSHHEAPS) show a composition bias toward basic and acidic residues. The segment covering 58–82 (HHKKEHRPNKKPNNHHKQKHAKTRN) has biased composition (basic residues). Lys134 and Lys140 each carry N6-acetyllysine. 6 residues coordinate Zn(2+): His208, His210, Asp212, His213, His277, and Asp299. N6-acetyllysine occurs at positions 323, 337, and 397. Position 500–504 (500–504 (HVSGH)) interacts with substrate. Lys511 carries the N6-acetyllysine modification. Position 526 (His526) interacts with Zn(2+). N6-acetyllysine occurs at positions 547, 634, and 649.

The protein belongs to the metallo-beta-lactamase superfamily. RNA-metabolizing metallo-beta-lactamase-like family. Bacterial RNase J subfamily. As to quaternary structure, homodimer. Homotetramer; dimer of homodimers. Interacts with RNA helicase RphA, might be a member of a minimal RNA degradosome complex. It depends on Zn(2+) as a cofactor. In terms of processing, acetylated on nine lysine residues. Some of the residues are acetylated by multiple different mechanisms. RimL is partially responsible for the acetylation of Lys-323, Lys-397 and Lys-649. HPB8_1270 homolog is partially responsible for the acetylation of Lys-323, Lys-397, Lys-511 and Lys-649. Acetyl-phosphate-mediated non-enzymatic acetylation pathway takes part in the acetylation of Lys-134, Lys-323, Lys-397, Lys-511 and Lys-649. Acetylation of the remaining residues Lys-140, Lys-337, Lys-547 and Lys-634 occurs by a yet undetermined mechanism. Acetylation on a number of these residues is important for growth regulation and proper cell morphology.

It localises to the cytoplasm. With respect to regulation, catalytic activity is regulated by the balance between homodimers and homotetramers, with homotetramers being the active forms of this enzyme. Acetylation allosterically regulates the homooligomerization state and hence the catalytic activity. In terms of biological role, an RNase that has 5'-3' exoribonuclease and endoribonuclease activity. Degrades 5'-monophosphorylated ssRNA and dsRNA, considerably more active on ssRNA. Association with RhpA significantly increases the dsRNase activity. Degrades RNA substrate with hairpin structures at both ends with low activity, but presence of RhpA significantly increases the activity on this substrate. Stimulates ATPase activity of RNA helicase RhpA. Involved in stabilization of mRNA but apparently not rRNA. The sequence is that of Ribonuclease J from Helicobacter pylori (strain B128).